A 219-amino-acid chain; its full sequence is Protoglabretal synthase ISM2 (219 aa).

5 helical membrane-spanning segments follow: residues 26–46 (VHAW…VLAG), 59–79 (LMIW…YWLF), 112–132 (AVVG…LFAV), 144–164 (ILQL…FITA), and 178–198 (YYKY…LIII). Residues 55–197 (TDKWLMIWWA…TWLLFPALII (143 aa)) enclose the EXPERA domain.

This sequence belongs to the EBP family.

It localises to the membrane. The enzyme catalyses 7,8-epoxymelianol = protoglabretal. It participates in secondary metabolite biosynthesis; terpenoid biosynthesis. Functionally, isomerase involved in the biosynthesis of glabretanes triterpene natural products such as glabretal, a component with in vitro antiproliferative properties on lymphocytes. Catalyzes the conversion of 7,8-epoxymelianol to protoglabretal via skeletal rearrangements. The protein is Protoglabretal synthase ISM2 of Ailanthus altissima (Tree-of-heaven).